The chain runs to 170 residues: Putative beta-eliminating lyase-like protein (170 aa).

K32 carries the N6-(pyridoxal phosphate)lysine modification.

This sequence belongs to the beta-eliminating lyase family. Pyridoxal 5'-phosphate is required as a cofactor.

In Dictyostelium discoideum (Social amoeba), this protein is Putative beta-eliminating lyase-like protein.